Reading from the N-terminus, the 415-residue chain is Secernin-2 (415 aa).

C8 is a catalytic residue.

It belongs to the peptidase C69 family. Secernin subfamily.

The chain is Secernin-2 (scrn2) from Danio rerio (Zebrafish).